The following is a 161-amino-acid chain: Nucleotide-binding protein Tcr_1902 (161 aa).

This sequence belongs to the YajQ family.

In terms of biological role, nucleotide-binding protein. The chain is Nucleotide-binding protein Tcr_1902 from Hydrogenovibrio crunogenus (strain DSM 25203 / XCL-2) (Thiomicrospira crunogena).